Here is a 736-residue protein sequence, read N- to C-terminus: Segment polarity protein dishevelled homolog DVL-2 (736 aa).

In terms of domain architecture, DIX spans 1 to 82; it reads MAETKVIYHL…RVVSWLASSE (82 aa). The tract at residues 79–241 is disordered; it reads ASSEGSQPDS…PRLERTSSFS (163 aa). A compositionally biased stretch (pro residues) spans 100–114; sequence EPPPPVPPPIPPPPA. Over residues 149–160 the composition is skewed to basic and acidic residues; that stretch reads MRRDRVRRRESS. The span at 181-195 shows a compositional bias: low complexity; the sequence is ESSSTLLTSEIETSI. Positions 205-217 are enriched in polar residues; that stretch reads SRFSSSTEQSSAS. The segment covering 219 to 231 has biased composition (basic residues); it reads LLKRHRRRRKQRP. Residues 254–326 form the PDZ domain; it reads TVTLNMEKYN…NDDAVRVLRD (73 aa). The tract at residues 327-427 is interaction with custos; that stretch reads IVHKPGPIVL…LASVVKVMAS (101 aa). The region spanning 428–502 is the DEP domain; sequence PESGLEVRDR…SEQCYYIFGD (75 aa). Low complexity-rich tracts occupy residues 574 to 593 and 616 to 629; these read MGSA…SNRS and KSGS…STRS. Residues 574–664 are disordered; it reads MGSAGSQHSE…HPPSVHSYAA (91 aa).

This sequence belongs to the DSH family. In terms of assembly, can form homomultimers. Interacts with prickle1. Interacts (via PDZ domain) with ccdc88c/dal and dact1-B/dpr. Interacts (via DIX domain) with ARP/Axin-related protein and dact1-A/frodo. Interacts with sdc4, possibly via fz7. Interacts directly (via DEP domain) with efnb1/ephrin-B1 and indirectly with the phosphorylated ephrin receptors ephb1 and ephb2, via association with SH domain-containing adapters. May interact with lrrc6. Interacts with custos (via NLS1 and NLS2); the interaction is negatively regulated by Wnt stimulation. In terms of processing, phosphorylated. Phosphorylation is controlled by frizzled proteins, correlates with the onset of embryo dorsalizing events and is higher in the dorsal half of early cleavage embryos. Phosphorylated on tyrosine residues in response to association with efnb1/ephrin-B1. In terms of tissue distribution, expressed equally in both animal-vegetal and dorsal-ventral directions of the early blastula. Becomes enriched on the dorsal side of the embryo after cortical rotation. Expressed along the anterior margin of eye field of neurulae (stage 16 embryos) and in the anterolateral crescent that borders the eye field. Continues to be expressed in the optic cup at stage 26. Expressed in the central nervous system throughout the early tailbud stage including the entire hindbrain.

It is found in the cytoplasm. The protein localises to the cytoplasmic vesicle. Its subcellular location is the cell projection. The protein resides in the cilium. It localises to the nucleus. It is found in the cell membrane. Involved in at least 2 independent signaling cascades, controlling cell fate via canonical Wnt signaling and cell polarity via a planar cell polarity (PCP) cascade. Acts synergistically with dal/dapple-like to activate Wnt signaling, stabilizing ctnnb1/beta-catenin and leading to dorsal axis formation. Also prevents degradation of ctnnb1/beta-catenin by displacing gsk3 from a complex with ARP/Axin-related protein. Has an additional role in anterior-posterior (A/P) axis formation, specifying different neuroectodermal cell fates along the A/P axis in a dose-dependent manner by activating several early patterning genes. In the PCP pathway, required at the cell membrane for PCP-mediated neural and mesodermal convergent extension during gastrulation and subsequent neural tube closure, acting to activate jnk. Also involved in blastopore closure and archenteron elongation during early, but not late, gastrulation. Associates with ephrin receptors and ligands and acts as part of a downstream PCP pathway to mediate ephrin-mediated cell repulsion via activation of rhoa. Required for efnb1/ephrin-B1-driven movement of non-retinal progenitor cells into the retina during eye field formation. Patterns the hindbrain. Required for ciliogenesis. Controls the docking of basal bodies to the apical plasma membrane; mediates the activation, but not localization of rhoa at the apical surface of ciliated cells during basal body docking. Furthermore, required for the association of basal bodies with membrane-bound vesicles and the vesicle-trafficking protein exoc4/sec8, and this association is in turn required for basal body docking. Once basal bodies are docked, required for the planar polarization of basal bodies that underlies ciliary beating and the directional fluid flow across ciliated epithelia. In Xenopus laevis (African clawed frog), this protein is Segment polarity protein dishevelled homolog DVL-2 (dvl2).